A 120-amino-acid chain; its full sequence is Aspartate 1-decarboxylase (120 aa).

Catalysis depends on serine 25, which acts as the Schiff-base intermediate with substrate; via pyruvic acid. Serine 25 is modified (pyruvic acid (Ser)). Residue threonine 57 coordinates substrate. Catalysis depends on tyrosine 58, which acts as the Proton donor. 73–75 (GAA) contributes to the substrate binding site.

This sequence belongs to the PanD family. As to quaternary structure, heterooctamer of four alpha and four beta subunits. Pyruvate is required as a cofactor. Post-translationally, is synthesized initially as an inactive proenzyme, which is activated by self-cleavage at a specific serine bond to produce a beta-subunit with a hydroxyl group at its C-terminus and an alpha-subunit with a pyruvoyl group at its N-terminus.

It localises to the cytoplasm. The catalysed reaction is L-aspartate + H(+) = beta-alanine + CO2. The protein operates within cofactor biosynthesis; (R)-pantothenate biosynthesis; beta-alanine from L-aspartate: step 1/1. Its function is as follows. Catalyzes the pyruvoyl-dependent decarboxylation of aspartate to produce beta-alanine. This is Aspartate 1-decarboxylase from Coprothermobacter proteolyticus (strain ATCC 35245 / DSM 5265 / OCM 4 / BT).